The primary structure comprises 149 residues: Calmodulin (149 aa).

EF-hand domains are found at residues Q8–N43, P44–D79, D81–K116, and L117–K149. Residues D21, D23, D25, K27, E32, D57, N59, D61, S63, E68, D94, N96, D98, K100, E105, D130, N132, D134, E136, and E141 each contribute to the Ca(2+) site.

This sequence belongs to the calmodulin family.

Calmodulin mediates the control of a large number of enzymes, ion channels and other proteins by Ca(2+). Among the enzymes to be stimulated by the calmodulin-Ca(2+) complex are a number of protein kinases and phosphatases. The chain is Calmodulin (CMD1) from Candida albicans (Yeast).